The sequence spans 299 residues: Tetrahydromethanopterin S-methyltransferase subunit E (299 aa).

A run of 6 helical transmembrane segments spans residues 57 to 79 (AISGEPVSYGLYVAVAGTIAWAL), 95 to 115 (GVAAVVHGAYSVSAFLGRTVG), 133 to 153 (IGPIVGHGFIAVFTMTLAAYL), 158 to 178 (LGNPFPLPLVALIFGITVGAI), 237 to 257 (GLCFGLIIFLDGWRSILGNII), and 262 to 282 (VTKTSIALLVGLLVVAVAAGI).

Belongs to the MtrE family. The complex is composed of 8 subunits; MtrA, MtrB, MtrC, MtrD, MtrE, MtrF, MtrG and MtrH.

It is found in the cell membrane. The catalysed reaction is 5-methyl-5,6,7,8-tetrahydromethanopterin + coenzyme M + 2 Na(+)(in) = 5,6,7,8-tetrahydromethanopterin + methyl-coenzyme M + 2 Na(+)(out). It participates in one-carbon metabolism; methanogenesis from CO(2); methyl-coenzyme M from 5,10-methylene-5,6,7,8-tetrahydromethanopterin: step 2/2. Functionally, part of a complex that catalyzes the formation of methyl-coenzyme M and tetrahydromethanopterin from coenzyme M and methyl-tetrahydromethanopterin. This is an energy-conserving, sodium-ion translocating step. The protein is Tetrahydromethanopterin S-methyltransferase subunit E of Methanococcus maripaludis (strain C5 / ATCC BAA-1333).